A 107-amino-acid polypeptide reads, in one-letter code: MKWVVIDTVIQPTCGISFSAIWGDMKMIIWYQSTIFLPPGSIFTPVKPGIILKDKEYPITIYNIAPFNKNLWSLLKSSQECPPGESEITNKCLHKSCIIKICPYGLK.

This sequence belongs to the IraM/RssC family.

The protein resides in the cytoplasm. Inhibits RpoS proteolysis by regulating RssB activity, thereby increasing the stability of the sigma stress factor RpoS during magnesium starvation. The chain is Anti-adapter protein IraM from Shigella dysenteriae serotype 1 (strain Sd197).